Consider the following 163-residue polypeptide: 6,7-dimethyl-8-ribityllumazine synthase (163 aa).

5-amino-6-(D-ribitylamino)uracil is bound by residues Phe27, 58–60 (ALE), and 87–89 (CVV). 92–93 (DT) contacts (2S)-2-hydroxy-3-oxobutyl phosphate. The active-site Proton donor is the His95. 5-amino-6-(D-ribitylamino)uracil is bound at residue Asn120. Arg134 provides a ligand contact to (2S)-2-hydroxy-3-oxobutyl phosphate.

Belongs to the DMRL synthase family.

It carries out the reaction (2S)-2-hydroxy-3-oxobutyl phosphate + 5-amino-6-(D-ribitylamino)uracil = 6,7-dimethyl-8-(1-D-ribityl)lumazine + phosphate + 2 H2O + H(+). Its pathway is cofactor biosynthesis; riboflavin biosynthesis; riboflavin from 2-hydroxy-3-oxobutyl phosphate and 5-amino-6-(D-ribitylamino)uracil: step 1/2. Catalyzes the formation of 6,7-dimethyl-8-ribityllumazine by condensation of 5-amino-6-(D-ribitylamino)uracil with 3,4-dihydroxy-2-butanone 4-phosphate. This is the penultimate step in the biosynthesis of riboflavin. The sequence is that of 6,7-dimethyl-8-ribityllumazine synthase from Rhodopseudomonas palustris (strain BisA53).